We begin with the raw amino-acid sequence, 491 residues long: Alpha-2-antiplasmin (491 aa).

The first 27 residues, 1 to 27 (MALLRGLLVLSLSCLQGPCFTFSPVSA), serve as a signal peptide directing secretion. A propeptide spanning residues 28–39 (VDLPGQQPVSEQ) is cleaved from the precursor. An intrachain disulfide couples C70 to C143. N126, N295, N309, and N316 each carry an N-linked (GlcNAc...) asparagine glycan. The interval 439-491 (SALPQLQEQRDSPDNRLIGQNDKADFHGGKTFGPDLKLAPRMEEDYPQFSSPK) is disordered. Sulfotyrosine is present on Y484.

This sequence belongs to the serpin family. Forms protease inhibiting heterodimer with TMPRSS7. Post-translationally, proteolytically cleaved at Pro-35 by both the prolyl endopeptidase FAP form and antiplasmin-cleaving enzyme FAP soluble form to generate mature alpha-2-antiplasmin. In terms of tissue distribution, expressed by the liver and secreted in plasma.

It is found in the secreted. Functionally, serine protease inhibitor. The major targets of this inhibitor are plasmin and trypsin, but it also inactivates matriptase-3/TMPRSS7 and chymotrypsin. The sequence is that of Alpha-2-antiplasmin (Serpinf2) from Mus musculus (Mouse).